The sequence spans 214 residues: MQHNKILIRQLGLQPYEPISQAMHEFTDARDEDTLDEIWLVEHHPVFTQGQAGKAEHVLVPGDIPVIQSDRGGQVTYHGPGQQVMYVLLNLKRRKLGVRELVTLLEQTVVNTLAEYGIESHPRADAPGVYVGDRKICSLGLRIRKGCSFHGLALNIAMDLAPFLRINPCGYAGMEMTQMRQWQPEVTPETVAPRLVANLLALLNHPPHEYLPQQ.

The region spanning 32–207 is the BPL/LPL catalytic domain; that stretch reads EDTLDEIWLV…NLLALLNHPP (176 aa). Substrate is bound by residues 71–78, 138–140, and 151–153; these read RGGQVTYH, SLG, and GLA. The Acyl-thioester intermediate role is filled by Cys169.

This sequence belongs to the LipB family.

The protein resides in the cytoplasm. The catalysed reaction is octanoyl-[ACP] + L-lysyl-[protein] = N(6)-octanoyl-L-lysyl-[protein] + holo-[ACP] + H(+). The protein operates within protein modification; protein lipoylation via endogenous pathway; protein N(6)-(lipoyl)lysine from octanoyl-[acyl-carrier-protein]: step 1/2. Catalyzes the transfer of endogenously produced octanoic acid from octanoyl-acyl-carrier-protein onto the lipoyl domains of lipoate-dependent enzymes. Lipoyl-ACP can also act as a substrate although octanoyl-ACP is likely to be the physiological substrate. The protein is Octanoyltransferase of Klebsiella pneumoniae (strain 342).